Reading from the N-terminus, the 145-residue chain is MGKIWVLHGPNLNLLGRREPDKYGTQTLDEINNELLHKAYTAGIPIQVEQTNFEGELIQWIHSMGPDDFLIINPGAWTHYSYAVRDAITSVQVPAIEVHLSNIHAREEFRKTSVIAPVCCGQISGLGGKSYSLALDYALEALTQK.

Residue Tyr-23 is the Proton acceptor of the active site. Residues Asn-73, His-79, and Asp-86 each coordinate substrate. Residue His-99 is the Proton donor of the active site. Substrate-binding positions include 100–101 (LS) and Arg-110.

This sequence belongs to the type-II 3-dehydroquinase family. As to quaternary structure, homododecamer.

It catalyses the reaction 3-dehydroquinate = 3-dehydroshikimate + H2O. The protein operates within metabolic intermediate biosynthesis; chorismate biosynthesis; chorismate from D-erythrose 4-phosphate and phosphoenolpyruvate: step 3/7. In terms of biological role, catalyzes a trans-dehydration via an enolate intermediate. This Desulfitobacterium hafniense (strain DSM 10664 / DCB-2) protein is 3-dehydroquinate dehydratase.